We begin with the raw amino-acid sequence, 230 residues long: Cytidylate kinase (230 aa).

12 to 20 (GPSGAGKGT) is a binding site for ATP.

Belongs to the cytidylate kinase family. Type 1 subfamily.

Its subcellular location is the cytoplasm. The catalysed reaction is CMP + ATP = CDP + ADP. It catalyses the reaction dCMP + ATP = dCDP + ADP. The polypeptide is Cytidylate kinase (Shewanella loihica (strain ATCC BAA-1088 / PV-4)).